Here is a 449-residue protein sequence, read N- to C-terminus: Ribulose bisphosphate carboxylase large chain (449 aa).

An N6,N6,N6-trimethyllysine modification is found at lysine 7. Residues asparagine 116 and threonine 166 each contribute to the substrate site. Lysine 168 acts as the Proton acceptor in catalysis. Lysine 170 provides a ligand contact to substrate. Residues lysine 194, aspartate 196, and glutamate 197 each coordinate Mg(2+). At lysine 194 the chain carries N6-carboxylysine. Histidine 287 functions as the Proton acceptor in the catalytic mechanism. Positions 288, 320, and 372 each coordinate substrate.

It belongs to the RuBisCO large chain family. Type I subfamily. As to quaternary structure, heterohexadecamer of 8 large chains and 8 small chains; disulfide-linked. The disulfide link is formed within the large subunit homodimers. It depends on Mg(2+) as a cofactor. Post-translationally, the disulfide bond which can form in the large chain dimeric partners within the hexadecamer appears to be associated with oxidative stress and protein turnover.

The protein localises to the plastid. It is found in the chloroplast. It catalyses the reaction 2 (2R)-3-phosphoglycerate + 2 H(+) = D-ribulose 1,5-bisphosphate + CO2 + H2O. It carries out the reaction D-ribulose 1,5-bisphosphate + O2 = 2-phosphoglycolate + (2R)-3-phosphoglycerate + 2 H(+). Its function is as follows. RuBisCO catalyzes two reactions: the carboxylation of D-ribulose 1,5-bisphosphate, the primary event in carbon dioxide fixation, as well as the oxidative fragmentation of the pentose substrate in the photorespiration process. Both reactions occur simultaneously and in competition at the same active site. This chain is Ribulose bisphosphate carboxylase large chain, found in Aspidistra elatior (Cast-iron plant).